Here is a 258-residue protein sequence, read N- to C-terminus: Peptide methionine sulfoxide reductase A4, chloroplastic (258 aa).

The transit peptide at 1-53 (MQVLVVSPPLIAAASLSKPLNSLSKAALSFSRAKPICPFPQTSRRPISVYKSP) directs the protein to the chloroplast. Position 54 is an N-acetylmethionine (M54). Residues 62–89 (GFGSRPQAQADPSSAAIAQGPDDDVPSS) form a disordered region. S245 carries the post-translational modification Phosphoserine.

This sequence belongs to the MsrA Met sulfoxide reductase family. Expressed in rosette and cauline leaves, and at lower levels in stems and flowers (at protein level).

It is found in the plastid. The protein localises to the chloroplast stroma. It catalyses the reaction L-methionyl-[protein] + [thioredoxin]-disulfide + H2O = L-methionyl-(S)-S-oxide-[protein] + [thioredoxin]-dithiol. The catalysed reaction is [thioredoxin]-disulfide + L-methionine + H2O = L-methionine (S)-S-oxide + [thioredoxin]-dithiol. In terms of biological role, catalyzes the reduction of methionine sulfoxide (MetSO) to methionine in proteins. Plays a protective role against oxidative stress by restoring activity to proteins that have been inactivated by methionine oxidation. Prevents the methionine sulfoxidation of the heat shock protein HSP21 and its subsequent inactivation. MSRA family specifically reduces the MetSO S-enantiomer. In Arabidopsis thaliana (Mouse-ear cress), this protein is Peptide methionine sulfoxide reductase A4, chloroplastic (MSR4).